Here is a 114-residue protein sequence, read N- to C-terminus: UPF0212 protein Mbur_0968 (114 aa).

Belongs to the UPF0212 family.

The sequence is that of UPF0212 protein Mbur_0968 from Methanococcoides burtonii (strain DSM 6242 / NBRC 107633 / OCM 468 / ACE-M).